The chain runs to 165 residues: Shikimate kinase (165 aa).

Residue 12-17 participates in ATP binding; sequence GCGKST. Ser-16 contributes to the Mg(2+) binding site. Substrate is bound by residues Asp-34, Arg-57, and Gly-79. Arg-116 contacts ATP. Residue Arg-133 participates in substrate binding.

It belongs to the shikimate kinase family. In terms of assembly, monomer. Requires Mg(2+) as cofactor.

It localises to the cytoplasm. The catalysed reaction is shikimate + ATP = 3-phosphoshikimate + ADP + H(+). The protein operates within metabolic intermediate biosynthesis; chorismate biosynthesis; chorismate from D-erythrose 4-phosphate and phosphoenolpyruvate: step 5/7. Its function is as follows. Catalyzes the specific phosphorylation of the 3-hydroxyl group of shikimic acid using ATP as a cosubstrate. The chain is Shikimate kinase from Clostridium botulinum (strain Alaska E43 / Type E3).